A 224-amino-acid polypeptide reads, in one-letter code: Endoplasmic reticulum vesicle protein 25 (224 aa).

Positions 1 to 25 (MIPPRSLGSTAALLLVLLFTTLASA) are cleaved as a signal peptide. Residues 26-190 (IKFDLPSNAH…ADTNLSTNMR (165 aa)) lie on the Lumenal side of the membrane. Positions 38 to 131 (TKCIWNYALS…IPVVTIDLDV (94 aa)) constitute a GOLD domain. Residues 191 to 211 (VTNFAILTLIALIALGVWQVF) form a helical membrane-spanning segment. The Cytoplasmic segment spans residues 212–224 (HLRGFFKRKYLID).

Belongs to the EMP24/GP25L family.

The protein localises to the endoplasmic reticulum membrane. The protein resides in the golgi apparatus membrane. Its function is as follows. Constituent of COPII-coated endoplasmic reticulum-derived transport vesicles. Required for efficient transport of a subset of secretory proteins to the Golgi. Facilitates retrograde transport from the Golgi to the endoplasmic reticulum. The chain is Endoplasmic reticulum vesicle protein 25 (ERV25) from Mycosarcoma maydis (Corn smut fungus).